We begin with the raw amino-acid sequence, 290 residues long: Energy-coupling factor transporter ATP-binding protein EcfA2 (290 aa).

The region spanning 6–246 (EKVEHVYNAR…ADKLAAIGLS (241 aa)) is the ABC transporter domain. 40-47 (GHTGSGKS) is an ATP binding site.

Belongs to the ABC transporter superfamily. Energy-coupling factor EcfA family. In terms of assembly, forms a stable energy-coupling factor (ECF) transporter complex composed of 2 membrane-embedded substrate-binding proteins (S component), 2 ATP-binding proteins (A component) and 2 transmembrane proteins (T component).

The protein localises to the cell membrane. Its function is as follows. ATP-binding (A) component of a common energy-coupling factor (ECF) ABC-transporter complex. Unlike classic ABC transporters this ECF transporter provides the energy necessary to transport a number of different substrates. The protein is Energy-coupling factor transporter ATP-binding protein EcfA2 of Geobacillus kaustophilus (strain HTA426).